A 194-amino-acid chain; its full sequence is Peptidyl-tRNA hydrolase (194 aa).

A tRNA-binding site is contributed by Tyr-17. His-22 functions as the Proton acceptor in the catalytic mechanism. Residues Tyr-68, Asn-70, and Asn-116 each coordinate tRNA.

The protein belongs to the PTH family. As to quaternary structure, monomer.

It is found in the cytoplasm. The enzyme catalyses an N-acyl-L-alpha-aminoacyl-tRNA + H2O = an N-acyl-L-amino acid + a tRNA + H(+). In terms of biological role, hydrolyzes ribosome-free peptidyl-tRNAs (with 1 or more amino acids incorporated), which drop off the ribosome during protein synthesis, or as a result of ribosome stalling. Catalyzes the release of premature peptidyl moieties from peptidyl-tRNA molecules trapped in stalled 50S ribosomal subunits, and thus maintains levels of free tRNAs and 50S ribosomes. The protein is Peptidyl-tRNA hydrolase of Pseudomonas syringae pv. syringae (strain B728a).